The primary structure comprises 315 residues: Ribosomal RNA small subunit methyltransferase H (315 aa).

Residues 35–37, D55, F84, D105, and Q112 each bind S-adenosyl-L-methionine; that span reads AGH.

The protein belongs to the methyltransferase superfamily. RsmH family.

Its subcellular location is the cytoplasm. It carries out the reaction cytidine(1402) in 16S rRNA + S-adenosyl-L-methionine = N(4)-methylcytidine(1402) in 16S rRNA + S-adenosyl-L-homocysteine + H(+). In terms of biological role, specifically methylates the N4 position of cytidine in position 1402 (C1402) of 16S rRNA. This is Ribosomal RNA small subunit methyltransferase H from Streptococcus agalactiae serotype Ia (strain ATCC 27591 / A909 / CDC SS700).